The chain runs to 137 residues: Cofilin-1A (137 aa).

An ADF-H domain is found at 2 to 135 (SSGIALAPNC…KDSCFYEKCT (134 aa)).

It belongs to the actin-binding proteins ADF family.

The protein resides in the nucleus matrix. The protein localises to the cytoplasm. It localises to the cytoskeleton. Controls reversibly actin polymerization and depolymerization in a pH-sensitive manner. It has the ability to bind G- and F-actin in a 1:1 ratio of cofilin to actin. It is the major component of intranuclear and cytoplasmic actin rods. The protein is Cofilin-1A (cofA) of Dictyostelium discoideum (Social amoeba).